A 238-amino-acid chain; its full sequence is MERFALWFIFLAGSLAQEDLVGNVFLFPKPSVTTYAILKPEVEKPLKNLTVCLRSYTTLTRFHSLLSLATSNPLQDNAFLLFSKPPNQCSIYINQEENVFKVDPTAVEWKHTCVSWDSVSGVVELWIDGKLYPRTVSKKASSIGFPSSIIQGQEQDSFGGGFNIDQSFVGEISDVHMWDYVLTPDHIQKVLFANMDFNGNIISWRSLQYELRGQATTQPKRQCKTLEHHYGLFAKCYK.

The first 16 residues, Met1–Ala16, serve as a signal peptide directing secretion. The residue at position 17 (Gln17) is a Pyrrolidone carboxylic acid. The region spanning Val21–Cys223 is the Pentraxin (PTX) domain. An intrachain disulfide couples Cys52 to Cys113. Ca(2+)-binding residues include Asp76, Asn77, Glu154, Gln155, Asp156, and Gln166.

Belongs to the pentraxin family. As to quaternary structure, homodimer; disulfide-linked. It is not known if it assembles into a pentraxin (or pentaxin) structure. Pentaxins have a discoid arrangement of 5 non-covalently bound subunits. Ca(2+) is required as a cofactor. In terms of processing, cys-89 or Cys-223 or Cys-236 could be involved in interchain disulfide linkage.

The protein resides in the secreted. In terms of biological role, displays several functions associated with host defense: it promotes agglutination, bacterial capsular swelling, phagocytosis, and complement fixation through its calcium-dependent binding to phosphorylcholine. The protein is C-reactive protein (crp) of Xenopus laevis (African clawed frog).